The primary structure comprises 93 residues: Small ribosomal subunit protein mS33 (93 aa).

The protein belongs to the mitochondrion-specific ribosomal protein mS33 family. As to quaternary structure, component of the mitochondrial small ribosomal subunit (mt-SSU). Mature yeast 74S mitochondrial ribosomes consist of a small (37S) and a large (54S) subunit. The 37S small subunit contains a 15S ribosomal RNA (15S mt-rRNA) and at least 32 different proteins. The 54S large subunit contains a 21S rRNA (21S mt-rRNA) and at least 45 different proteins.

The protein resides in the mitochondrion. Its function is as follows. Component of the mitochondrial ribosome (mitoribosome), a dedicated translation machinery responsible for the synthesis of mitochondrial genome-encoded proteins, including at least some of the essential transmembrane subunits of the mitochondrial respiratory chain. The mitoribosomes are attached to the mitochondrial inner membrane and translation products are cotranslationally integrated into the membrane. The protein is Small ribosomal subunit protein mS33 (rsm27) of Schizosaccharomyces pombe (strain 972 / ATCC 24843) (Fission yeast).